A 638-amino-acid polypeptide reads, in one-letter code: Growth hormone receptor (638 aa).

The signal sequence occupies residues 1-18 (MDLWRVFLTLALAVSSDM). Residues 19-265 (FPGSGATPAT…TLAACEEDFR (247 aa)) lie on the Extracellular side of the membrane. Disulfide bonds link Cys-56–Cys-66 and Cys-101–Cys-112. N-linked (GlcNAc...) asparagine glycosylation occurs at Asn-115. The cysteines at positions 126 and 140 are disulfide-linked. The Fibronectin type-III domain maps to 151 to 254 (PPIGLNWTLL…EVLRVTFPQM (104 aa)). N-linked (GlcNAc...) asparagine glycosylation is found at Asn-156, Asn-161, and Asn-200. The short motif at 240–244 (YSEFS) is the WSXWS motif element. The chain crosses the membrane as a helical span at residues 266-289 (FPWFLIIIFGIFGVAVMLFVVIFS). Topologically, residues 290–638 (KQQRIKMLIL…STDQLNKIMQ (349 aa)) are cytoplasmic. A required for JAK2 binding region spans residues 295–380 (KMLILPPVPV…QEKSAGILGA (86 aa)). The Box 1 motif motif lies at 298–306 (ILPPVPVPK). The UbE motif signature appears at 341-350 (DSWVEFIELD). At Ser-342 the chain carries Phosphoserine. Positions 357–389 (KTEESDTDRLLSDDQEKSAGILGAKDDDSGRTS) are disordered. Positions 363 to 373 (TDRLLSDDQEK) are enriched in basic and acidic residues. A phosphotyrosine mark is found at Tyr-487 and Tyr-594.

Belongs to the type I cytokine receptor family. Type 1 subfamily. On growth hormone (GH) binding, forms homodimers and binds JAK2 via a box 1-containing domain. Post-translationally, the soluble form (GHBP) is produced by phorbol ester-promoted proteolytic cleavage at the cell surface (shedding) by ADAM17/TACE. Shedding is inhibited by growth hormone (GH) binding to the receptor probably due to a conformational change in GHR rendering the receptor inaccessible to ADAM17. On GH binding, phosphorylated on tyrosine residues in the cytoplasmic domain by JAK2. Phosphorylation on either (or all of) Tyr-534, Tyr-566 and/or Tyr-627 is required for STAT5 activation. Phosphorylation on Tyr-333 would seem necessary for JAK2 activation. In terms of processing, ubiquitinated by the ECS(SOCS2) complex following ligand-binding and phosphorylation by JAK2, leading to its degradation by the proteasome. Regulation by the ECS(SOCS2) complex acts as a negative feedback loop of growth hormone receptor signaling. Ubiquitination is not sufficient for GHR internalization. Highest expression in liver. Also expressed in heart, kidney and muscle.

Its subcellular location is the cell membrane. It is found in the secreted. In terms of biological role, receptor for pituitary gland growth hormone involved in regulating postnatal body growth. On ligand binding, couples to, and activates the JAK2/STAT5 pathway. Functionally, receptor for pituitary gland growth hormone (GH1) involved in regulating postnatal body growth. On ligand binding, couples to the JAK2/STAT5 pathway. Its function is as follows. The soluble form (GHBP) acts as a reservoir of growth hormone in plasma and may be a modulator/inhibitor of GH signaling. In Rattus norvegicus (Rat), this protein is Growth hormone receptor (Ghr).